We begin with the raw amino-acid sequence, 838 residues long: Ribonucleoside-diphosphate reductase large subunit (838 aa).

The 92-residue stretch at 6 to 97 (KLVTKRDGSV…VTALHKTTTE (92 aa)) folds into the ATP-cone domain. Residues 10 to 11 (KR), 16 to 22 (EPYDEKV), T58, and D62 each bind ATP. S227 lines the GDP pocket. A disulfide bridge connects residues C228 and C454. DTTP-binding positions include 236–238 (DSI), K253, R266, and 273–274 (AG). N437 serves as a coordination point for GDP. The Proton acceptor role is filled by N437. C439 acts as the Cysteine radical intermediate in catalysis. GDP is bound by residues E441 and 626–629 (TAST). The active-site Proton acceptor is E441. A compositionally biased stretch (basic and acidic residues) spans 780-794 (KELPKPDKQSKEEVH). Residues 780–838 (KELPKPDKQSKEEVHGSVGRGKRKRVGEKPTANHSNAGAPNLNGPPDTDGDGGCLNCGS) form a disordered region.

This sequence belongs to the ribonucleoside diphosphate reductase large chain family. As to quaternary structure, heterodimer of a large and a small subunit.

The enzyme catalyses a 2'-deoxyribonucleoside 5'-diphosphate + [thioredoxin]-disulfide + H2O = a ribonucleoside 5'-diphosphate + [thioredoxin]-dithiol. It carries out the reaction dCDP + [thioredoxin]-disulfide + H2O = CDP + [thioredoxin]-dithiol. Its activity is regulated as follows. Under complex allosteric control mediated by deoxynucleoside triphosphates and ATP binding to separate specificity and activation sites on the large subunit. The type of nucleotide bound at the specificity site determines substrate preference. It seems probable that ATP makes the enzyme reduce CDP and UDP, dGTP favors ADP reduction and dTTP favors GDP reduction. Stimulated by ATP and inhibited by dATP binding to the activity site. Its function is as follows. Provides the precursors necessary for DNA synthesis. Catalyzes the rate limiting step in the de novo synthesis of deoxyribonucleotides by directly reducing ribonucleotides to the corresponding deoxyribonucleotides. The protein is Ribonucleoside-diphosphate reductase large subunit (RNR1) of Trypanosoma brucei brucei.